A 75-amino-acid polypeptide reads, in one-letter code: Large ribosomal subunit protein bL31 (75 aa).

This sequence belongs to the bacterial ribosomal protein bL31 family. Type A subfamily. In terms of assembly, part of the 50S ribosomal subunit.

In terms of biological role, binds the 23S rRNA. The polypeptide is Large ribosomal subunit protein bL31 (Chlorobaculum tepidum (strain ATCC 49652 / DSM 12025 / NBRC 103806 / TLS) (Chlorobium tepidum)).